A 496-amino-acid chain; its full sequence is GTPase Der (496 aa).

EngA-type G domains follow at residues 3-166 (PVVA…FDNL) and 208-381 (IKLA…RSAT). Residues 9 to 16 (GRPNVGKS), 56 to 60 (DTGGI), 118 to 121 (NKVD), 214 to 221 (GRPNVGKS), 261 to 265 (DTAGV), and 326 to 329 (NKWD) contribute to the GTP site. The KH-like domain maps to 382 to 466 (TRVGTSVLTR…PIRIQFQNSD (85 aa)).

The protein belongs to the TRAFAC class TrmE-Era-EngA-EngB-Septin-like GTPase superfamily. EngA (Der) GTPase family. As to quaternary structure, associates with the 50S ribosomal subunit.

GTPase that plays an essential role in the late steps of ribosome biogenesis. This Vibrio vulnificus (strain YJ016) protein is GTPase Der.